The following is a 295-amino-acid chain: Probable isochorismatase (295 aa).

The tract at residues 1–21 (MGIPKIAGYPLPTPAEFPDNR) is disordered. A Carrier domain is found at 207-286 (EIRSQKPLTL…EWWLVIEQAR (80 aa)). Serine 247 carries the post-translational modification O-(pantetheine 4'-phosphoryl)serine.

Belongs to the isochorismatase family. The cofactor is pantetheine 4'-phosphate.

The catalysed reaction is isochorismate + H2O = (2S,3S)-2,3-dihydroxy-2,3-dihydrobenzoate + pyruvate. The protein operates within siderophore biosynthesis; vulnibactin biosynthesis. Involved in the biosynthesis of the catechol siderophore vulnibactin. Vulnibactin is a chelating compound involved in transporting iron from the bacterial environment into the cell cytoplasm. The chain is Probable isochorismatase (venB) from Vibrio vulnificus (strain CMCP6).